Consider the following 651-residue polypeptide: Probable potassium transport system protein Kup (651 aa).

12 consecutive transmembrane segments (helical) span residues 41–61 (LVLG…IYAF), 82–102 (VVSF…VLFV), 130–150 (LILG…VITP), 163–183 (IVAP…LVTL), 194–214 (VAIV…ASGL), 235–255 (FLTV…LAMT), 276–296 (WLWI…AFIL), 309–329 (MIPS…TVIA), 366–386 (IYIP…VLGF), 395–415 (AYGI…YIVM), 426–446 (ALPI…ANII), and 450–470 (EGGW…WTWV).

It belongs to the HAK/KUP transporter (TC 2.A.72) family.

The protein localises to the cell inner membrane. The catalysed reaction is K(+)(in) + H(+)(in) = K(+)(out) + H(+)(out). Its function is as follows. Transport of potassium into the cell. Likely operates as a K(+):H(+) symporter. This is Probable potassium transport system protein Kup from Brucella ovis (strain ATCC 25840 / 63/290 / NCTC 10512).